The following is a 318-amino-acid chain: Acetyl-coenzyme A carboxylase carboxyl transferase subunit alpha (318 aa).

Residues 41-295 enclose the CoA carboxyltransferase C-terminal domain; sequence HLEKKNEELT…KQRILTDLNE (255 aa).

This sequence belongs to the AccA family. In terms of assembly, acetyl-CoA carboxylase is a heterohexamer composed of biotin carboxyl carrier protein (AccB), biotin carboxylase (AccC) and two subunits each of ACCase subunit alpha (AccA) and ACCase subunit beta (AccD).

The protein localises to the cytoplasm. The enzyme catalyses N(6)-carboxybiotinyl-L-lysyl-[protein] + acetyl-CoA = N(6)-biotinyl-L-lysyl-[protein] + malonyl-CoA. Its pathway is lipid metabolism; malonyl-CoA biosynthesis; malonyl-CoA from acetyl-CoA: step 1/1. Component of the acetyl coenzyme A carboxylase (ACC) complex. First, biotin carboxylase catalyzes the carboxylation of biotin on its carrier protein (BCCP) and then the CO(2) group is transferred by the carboxyltransferase to acetyl-CoA to form malonyl-CoA. The polypeptide is Acetyl-coenzyme A carboxylase carboxyl transferase subunit alpha (Tolumonas auensis (strain DSM 9187 / NBRC 110442 / TA 4)).